The chain runs to 171 residues: Sorcin (171 aa).

EF-hand domains lie at M3 to T38, L40 to F69, K70 to H105, and L106 to L140. Positions 16, 18, 20, 22, 27, 53, 55, 57, 59, 64, 83, 85, 87, 89, and 94 each coordinate Ca(2+).

The protein resides in the cytoplasm. Its function is as follows. Calcium-binding protein. In Schistosoma japonicum (Blood fluke), this protein is Sorcin.